A 442-amino-acid chain; its full sequence is Syndecan-3 (442 aa).

Disordered stretches follow at residues 1 to 25 and 55 to 85; these read MKPG…GPGA and RPVD…SGYF. Positions 1–44 are cleaved as a signal peptide; that stretch reads MKPGPPRRGTAQGQRVDTATHGPGARGLLLPPLLLLLLAGRAAG. The Extracellular segment spans residues 45–387; that stretch reads AQRWRNENFE…SILERKEVLV (343 aa). The span at 61-75 shows a compositional bias: acidic residues; the sequence is GSGDDDSFPDDELDD. S78, S80, S82, and S89 each carry an O-linked (Xyl...) (glycosaminoglycan) serine glycan. O-linked (GalNAc) threonine; by GALNT13 glycosylation is present at T107. 5 disordered regions span residues 151 to 175, 180 to 199, 225 to 244, 252 to 327, and 339 to 372; these read EEPS…TGAP, APAT…PATA, ATTP…DTEA, TATS…TTQP, and AAAK…SSAA. The segment covering 157–175 has biased composition (low complexity); the sequence is ATTISTTTSTTAATTTGAP. The O-linked (GalNAc) serine; by GALNT13 glycan is linked to S161. O-linked (GalNAc) threonine; by GALNT13 glycosylation is found at T162, T163, T170, and T172. The span at 276 to 287 shows a compositional bias: low complexity; that stretch reads TLPLGTTAPGPT. Over residues 289–303 the composition is skewed to polar residues; that stretch reads VAQTPTPESLLTTTQ. O-linked (Xyl...) (glycosaminoglycan) serine glycans are attached at residues S315 and S367. The helical transmembrane segment at 388–408 threads the bilayer; the sequence is AVIVGGVVGALFAAFLVTLLI. Phosphotyrosine occurs at positions 409, 419, 431, and 441. Residues 409-442 lie on the Cytoplasmic side of the membrane; that stretch reads YRMKKKDEGSYTLEEPKQASVTYQKPDKQEEFYA. The tract at residues 419 to 442 is disordered; sequence YTLEEPKQASVTYQKPDKQEEFYA. A compositionally biased stretch (basic and acidic residues) spans 433–442; the sequence is KPDKQEEFYA.

Belongs to the syndecan proteoglycan family. In terms of assembly, interacts with TIAM1. Interacts (via heparan sulfate chains) with PTN; this interaction mediates the neurite outgrowth-promoting signal from PTN to the cytoskeleton of growing neurites; this interaction mediates osteoblast recruitment. Interacts with MDK; this interaction induces SDC3 clustering; this interaction induces neuronal cell adhesion and neurite outgrowth. Post-translationally, O-glycosylated within the Thr/Ser-rich region which could interact with lectin domains on other molecules. High levels in neonatal brain, heart, and Schwann cells, barely detectable in neonatal or adult liver, or adult brain.

It is found in the cell membrane. In terms of biological role, cell surface proteoglycan that may bear heparan sulfate. May have a role in the organization of cell shape by affecting the actin cytoskeleton, possibly by transferring signals from the cell surface in a sugar-dependent mechanism. This Rattus norvegicus (Rat) protein is Syndecan-3 (Sdc3).